The primary structure comprises 203 residues: Superoxide dismutase [Mn] (203 aa).

4 residues coordinate Mn(2+): His27, His81, Asp164, and His168.

Belongs to the iron/manganese superoxide dismutase family. As to quaternary structure, homodimer. Mn(2+) is required as a cofactor.

It catalyses the reaction 2 superoxide + 2 H(+) = H2O2 + O2. In terms of biological role, destroys superoxide anion radicals which are normally produced within the cells and which are toxic to biological systems. Partially complements double sodA-sodB deletions in E.coli. This Pseudomonas aeruginosa (strain ATCC 15692 / DSM 22644 / CIP 104116 / JCM 14847 / LMG 12228 / 1C / PRS 101 / PAO1) protein is Superoxide dismutase [Mn].